A 778-amino-acid polypeptide reads, in one-letter code: Zinc finger protein 749 (778 aa).

Residues 8-101 (MVFEDVAIYF…ILKDILHLAE (94 aa)) enclose the KRAB domain. The C2H2-type 1; degenerate zinc-finger motif lies at 152 to 174 (FTCTQGGKDFTASSDLLQQQVLN). The segment at 196 to 218 (FNSSQGGKDFCHQHGLFEHQKTH) adopts a C2H2-type 2; degenerate zinc-finger fold. The C2H2-type 3; degenerate zinc-finger motif lies at 224–246 (YEFSECGELFRYNSNLIKYQQNH). The C2H2-type 4; degenerate zinc finger occupies 252–274 (YEGTEYGKTFIRKSNLVQHQKIH). 6 consecutive C2H2-type zinc fingers follow at residues 298–320 (YECT…QKTH), 326–348 (YECN…QKVH), 354–376 (YECS…QRVH), 382–404 (FECS…QRVH), 410–432 (YKCS…LKIH), and 438–460 (YECT…QKIH). Position 466 is an N6-acetyllysine (lysine 466). C2H2-type zinc fingers lie at residues 483–505 (YTCS…QKIH) and 511–533 (YECT…EKIH). Lysine 539 bears the N6-acetyllysine mark. Residues 556–578 (YVCSECGKAFLTQAHLDGHQKIQ) form a C2H2-type 13; degenerate zinc finger. 3 C2H2-type zinc fingers span residues 584–606 (YECN…QRIH), 612–634 (YKCS…QKVH), and 640–662 (YECS…QRVH). The C2H2-type 17; atypical zinc finger occupies 668 to 690 (YECSNCGKFLRYRSTFIKHHKVC). The C2H2-type 18 zinc finger occupies 696 to 718 (HECSKCRELFRTKSSLIIHQQSH). The segment at 751 to 773 (YECGESSKVFKYNSSLIKHQIIH) adopts a C2H2-type 19; degenerate zinc-finger fold. Glycyl lysine isopeptide (Lys-Gly) (interchain with G-Cter in SUMO2) cross-links involve residues lysine 761 and lysine 768.

This sequence belongs to the krueppel C2H2-type zinc-finger protein family.

It is found in the nucleus. In terms of biological role, may be involved in transcriptional regulation. This is Zinc finger protein 749 (ZNF749) from Homo sapiens (Human).